The chain runs to 1133 residues: Myb-binding protein 1A (1133 aa).

Disordered stretches follow at residues 1-62 (MKSK…ENTA), 718-764 (PLSK…DAES), 924-943 (GEEHSEEDQENGKQPASRQA), and 1111-1133 (KKVAKQKKQAAAKPMVVEDEEST). Composition is skewed to basic and acidic residues over residues 20–35 (KAKEDRKRAKTQKSEA) and 50–60 (EKPAETEEKEN). Acidic residues-rich tracts occupy residues 725–735 (GEEESDDELDK) and 744–762 (DDSEDEDEDEEEDEGEDDA).

It belongs to the MYBBP1A family. Interacts with nclb.

The protein resides in the cytoplasm. The protein localises to the nucleus. It is found in the nucleolus. Has a role in rRNA biogenesis, cell proliferation and tissue growth by contributing to the localization of nclb to the nucleolus. This chain is Myb-binding protein 1A, found in Drosophila melanogaster (Fruit fly).